Consider the following 613-residue polypeptide: Acetylcholinesterase (613 aa).

Residues 1 to 30 (MRPPWCPLHTPSLTPPLLLLLFLIGGGAEA) form the signal peptide. A glycan (N-linked (GlcNAc...) asparagine) is linked at N91. C99 and C126 form a disulfide bridge. The active-site Acyl-ester intermediate is the S233. C287 and C302 are disulfide-bonded. Residue N295 is glycosylated (N-linked (GlcNAc...) asparagine). Residue E364 is the Charge relay system of the active site. Residue N380 is glycosylated (N-linked (GlcNAc...) asparagine). C439 and C559 form a disulfide bridge. The active-site Charge relay system is the H477. A glycan (N-linked (GlcNAc...) asparagine) is linked at N494.

Belongs to the type-B carboxylesterase/lipase family. In terms of assembly, interacts with PRIMA1. The interaction with PRIMA1 is required to anchor it to the basal lamina of cells and organize into tetramers. Isoform H generates GPI-anchored dimers; disulfide linked. Isoform T generates multiple structures, ranging from monomers and dimers to collagen-tailed and hydrophobic-tailed forms, in which catalytic tetramers are associated with anchoring proteins that attach them to the basal lamina or to cell membranes. In the collagen-tailed forms, isoform T subunits are associated with a specific collagen, COLQ, which triggers the formation of isoform T tetramers, from monomers and dimers.

Its subcellular location is the synapse. The protein localises to the secreted. The protein resides in the cell membrane. It carries out the reaction acetylcholine + H2O = choline + acetate + H(+). In terms of biological role, terminates signal transduction at the neuromuscular junction by rapid hydrolysis of the acetylcholine released into the synaptic cleft. The protein is Acetylcholinesterase (ACHE) of Bos taurus (Bovine).